Consider the following 265-residue polypeptide: Hydroxyethylthiazole kinase 2 (265 aa).

Substrate is bound at residue Met-39. Residues Lys-115 and Thr-168 each coordinate ATP. Gly-195 serves as a coordination point for substrate.

The protein belongs to the Thz kinase family. Requires Mg(2+) as cofactor.

The catalysed reaction is 5-(2-hydroxyethyl)-4-methylthiazole + ATP = 4-methyl-5-(2-phosphooxyethyl)-thiazole + ADP + H(+). Its pathway is cofactor biosynthesis; thiamine diphosphate biosynthesis; 4-methyl-5-(2-phosphoethyl)-thiazole from 5-(2-hydroxyethyl)-4-methylthiazole: step 1/1. Catalyzes the phosphorylation of the hydroxyl group of 4-methyl-5-beta-hydroxyethylthiazole (THZ). The chain is Hydroxyethylthiazole kinase 2 from Clostridium botulinum (strain Kyoto / Type A2).